The following is a 305-amino-acid chain: LysM and putative peptidoglycan-binding domain-containing protein 3 (305 aa).

The Extracellular segment spans residues 1 to 216 (MAGRNQNRTV…PYYGADWGIG (216 aa)). N-linked (GlcNAc...) asparagine glycans are attached at residues Asn7 and Asn26. Ser55 is subject to Phosphoserine. Residues 65–109 (LTKDIQEGDTLNAVALQYCCTVADIKRVNNLISDQDFFALRSIKI) enclose the LysM domain. N-linked (GlcNAc...) asparagine glycosylation is present at Asn199. Residues 217–237 (WWTAVVIMLIVGIITPVFYLL) form a helical membrane-spanning segment. Residues 238-305 (YYEILAKVDV…PQAHDAQHKT (68 aa)) lie on the Cytoplasmic side of the membrane. Residues 253 to 305 (VGSSHLHPGLTPPTQHREMENEIGPTKGIPVGQQDDHKLYRQDPQAHDAQHKT) are disordered. A compositionally biased stretch (basic and acidic residues) spans 286–305 (QDDHKLYRQDPQAHDAQHKT).

It is found in the cell membrane. It localises to the golgi apparatus. Essential for Golgi structural integrity. This is LysM and putative peptidoglycan-binding domain-containing protein 3 (Lysmd3) from Mus musculus (Mouse).